We begin with the raw amino-acid sequence, 366 residues long: Peptide chain release factor 2 (366 aa).

Gln251 bears the N5-methylglutamine mark.

The protein belongs to the prokaryotic/mitochondrial release factor family. Methylated by PrmC. Methylation increases the termination efficiency of RF2.

It localises to the cytoplasm. Its function is as follows. Peptide chain release factor 2 directs the termination of translation in response to the peptide chain termination codons UGA and UAA. This is Peptide chain release factor 2 from Exiguobacterium sp. (strain ATCC BAA-1283 / AT1b).